Consider the following 238-residue polypeptide: tRNA (guanine-N(7)-)-methyltransferase (238 aa).

E68, E93, D120, and D143 together coordinate S-adenosyl-L-methionine. The active site involves D143. Substrate contacts are provided by residues K147, D179, and 216–219; that span reads TKFE.

This sequence belongs to the class I-like SAM-binding methyltransferase superfamily. TrmB family.

The enzyme catalyses guanosine(46) in tRNA + S-adenosyl-L-methionine = N(7)-methylguanosine(46) in tRNA + S-adenosyl-L-homocysteine. The protein operates within tRNA modification; N(7)-methylguanine-tRNA biosynthesis. Catalyzes the formation of N(7)-methylguanine at position 46 (m7G46) in tRNA. This chain is tRNA (guanine-N(7)-)-methyltransferase, found in Shewanella woodyi (strain ATCC 51908 / MS32).